A 469-amino-acid polypeptide reads, in one-letter code: Interstitial collagenase (469 aa).

Positions 1-19 are cleaved as a signal peptide; sequence MFSLLLLLLLLCNTGSHGF. A propeptide spans 20 to 99 (activation peptide); sequence PAATSETQEQ…PRCGVPDVAE (80 aa). At Ser57 the chain carries Phosphoserine. The short motif at 90-97 is the Cysteine switch element; it reads PRCGVPDV. Cys92 is a Zn(2+) binding site. Asn120 carries N-linked (GlcNAc...) asparagine glycosylation. Residues Asp124 and Asp158 each coordinate Ca(2+). His168 and Asp170 together coordinate Zn(2+). The Ca(2+) site is built by Asp175, Gly176, Gly178, and Asn180. A Zn(2+)-binding site is contributed by His183. Ca(2+) is bound by residues Gly190, Gly192, and Asp194. Residue His196 coordinates Zn(2+). Positions 198, 199, and 201 each coordinate Ca(2+). Residue His218 participates in Zn(2+) binding. Glu219 is an active-site residue. Residues His222 and His228 each coordinate Zn(2+). Position 274 is a phosphothreonine (Thr274). Hemopexin repeat units follow at residues 275 to 324, 325 to 371, 374 to 422, and 423 to 466; these read PQVC…WPQV, PNGL…FGFP, VKNI…FPGI, and GNKV…WFNC. Cys278 and Cys466 are oxidised to a cystine. Ca(2+) is bound by residues Asp285 and Gln329. The residue at position 360 (Tyr360) is a Phosphotyrosine; by PKDCC. Ca(2+) is bound by residues Asp378 and Asp427.

It belongs to the peptidase M10A family. It depends on Ca(2+) as a cofactor. The cofactor is Zn(2+). Undergoes autolytic cleavage to produce a N-terminal fragment having reduced collagenolytic activity. Post-translationally, tyrosine phosphorylated in platelets by PKDCC/VLK.

It is found in the secreted. The protein resides in the extracellular space. Its subcellular location is the extracellular matrix. It catalyses the reaction Cleavage of the triple helix of collagen at about three-quarters of the length of the molecule from the N-terminus, at 775-Gly-|-Ile-776 in the alpha1(I) chain. Cleaves synthetic substrates and alpha-macroglobulins at bonds where P1' is a hydrophobic residue.. With respect to regulation, can be activated without removal of the activation peptide. Cleaves collagens of types I, II, and III at one site in the helical domain. Also cleaves collagens of types VII and X. The polypeptide is Interstitial collagenase (MMP1) (Sus scrofa (Pig)).